Here is a 324-residue protein sequence, read N- to C-terminus: dITP/XTP pyrophosphatase (324 aa).

The interval Met-1–Ile-127 is unknown. Positions Leu-128–Asn-324 are NTP pyrophosphatase. Residue Thr-131 to Lys-136 participates in substrate binding. The Mg(2+) site is built by Glu-164 and Asp-193. Catalysis depends on Asp-193, which acts as the Proton acceptor. Substrate-binding positions include Ser-194, Phe-277–Asp-280, Lys-300, and His-305–Arg-306.

It belongs to the HAM1 NTPase family. As to quaternary structure, homodimer. Mg(2+) is required as a cofactor.

It catalyses the reaction XTP + H2O = XMP + diphosphate + H(+). It carries out the reaction dITP + H2O = dIMP + diphosphate + H(+). The catalysed reaction is ITP + H2O = IMP + diphosphate + H(+). In terms of biological role, pyrophosphatase that catalyzes the hydrolysis of nucleoside triphosphates to their monophosphate derivatives, with a high preference for the non-canonical purine nucleotides XTP (xanthosine triphosphate), dITP (deoxyinosine triphosphate) and ITP. Seems to function as a house-cleaning enzyme that removes non-canonical purine nucleotides from the nucleotide pool, thus preventing their incorporation into DNA/RNA and avoiding chromosomal lesions. The polypeptide is dITP/XTP pyrophosphatase (Streptococcus agalactiae serotype III (strain NEM316)).